Reading from the N-terminus, the 268-residue chain is Ribosomal RNA large subunit methyltransferase E (268 aa).

5 residues coordinate S-adenosyl-L-methionine: Gly50, Trp52, Asp68, Asp84, and Asp109. Lys149 functions as the Proton acceptor in the catalytic mechanism. The TRAM domain occupies 196 to 254 (PLRKGDKFVVDIEKLGSSGDGAVLIEGFVVFVKEVEVGEKVRIKISDVKPNFAFADVEE).

It belongs to the class I-like SAM-binding methyltransferase superfamily. RNA methyltransferase RlmE family.

The protein localises to the cytoplasm. The enzyme catalyses uridine(2552) in 23S rRNA + S-adenosyl-L-methionine = 2'-O-methyluridine(2552) in 23S rRNA + S-adenosyl-L-homocysteine + H(+). Its function is as follows. Specifically methylates the uridine in position 2552 of 23S rRNA at the 2'-O position of the ribose in the fully assembled 50S ribosomal subunit. This Methanosarcina mazei (strain ATCC BAA-159 / DSM 3647 / Goe1 / Go1 / JCM 11833 / OCM 88) (Methanosarcina frisia) protein is Ribosomal RNA large subunit methyltransferase E.